Here is a 364-residue protein sequence, read N- to C-terminus: Fructose-1,6-bisphosphatase class 1 3 (364 aa).

The Mg(2+) site is built by E101, D123, L125, and D126. Substrate-binding positions include 126–129 (DGSS) and N218. E290 contacts Mg(2+).

Belongs to the FBPase class 1 family. As to quaternary structure, homotetramer. The cofactor is Mg(2+).

It is found in the cytoplasm. The enzyme catalyses beta-D-fructose 1,6-bisphosphate + H2O = beta-D-fructose 6-phosphate + phosphate. The protein operates within carbohydrate biosynthesis; gluconeogenesis. The polypeptide is Fructose-1,6-bisphosphatase class 1 3 (Cupriavidus necator (strain ATCC 17699 / DSM 428 / KCTC 22496 / NCIMB 10442 / H16 / Stanier 337) (Ralstonia eutropha)).